The following is a 185-amino-acid chain: MSKQILKDMETKADKTLHALKEELKTVRAGRANPSILDNIMVEYYGTSTPLKQVATISAPEARLLTIQPWDKSIMKEIEKQIQASNLGITPSNDGTIIRLPFPQLTEDRRKELTKVVKEYGEKSKVTIRSIRRDFVDDAKKMEKNAEISEDELHVLLDDIQSLTDKLTKEIDNIVTDKETELMEI.

The protein belongs to the RRF family.

Its subcellular location is the cytoplasm. In terms of biological role, responsible for the release of ribosomes from messenger RNA at the termination of protein biosynthesis. May increase the efficiency of translation by recycling ribosomes from one round of translation to another. The sequence is that of Ribosome-recycling factor from Finegoldia magna (strain ATCC 29328 / DSM 20472 / WAL 2508) (Peptostreptococcus magnus).